The sequence spans 481 residues: Zinc metalloproteinase/disintegrin (481 aa).

The first 20 residues, 1-20 (MIQVLLVTICLAVFPYQGSS), serve as a signal peptide directing secretion. The propeptide occupies 21 to 190 (IILESGNVDD…KASQLYLTPE (170 aa)). A Peptidase M12B domain is found at 197-392 (RYIKLAIVVD…DNPQCILNAP (196 aa)). Intrachain disulfides connect Cys-308–Cys-387, Cys-349–Cys-371, and Cys-351–Cys-354. Residue His-333 coordinates Zn(2+). The active site involves Glu-334. Residues His-337 and His-343 each contribute to the Zn(2+) site. The propeptide occupies 393 to 408 (LRTDTVSTPVSGNEFL). The 82-residue stretch at 400–481 (TPVSGNEFLE…ADCPRNGLYS (82 aa)) folds into the Disintegrin domain. 6 disulfides stabilise this stretch: Cys-414–Cys-429, Cys-416–Cys-424, Cys-423–Cys-446, Cys-437–Cys-443, Cys-442–Cys-467, and Cys-455–Cys-474. The Cell attachment site signature appears at 459 to 461 (RGD).

It belongs to the venom metalloproteinase (M12B) family. P-II subfamily. P-IIa sub-subfamily. As to quaternary structure, monomer. It depends on Zn(2+) as a cofactor. In terms of tissue distribution, expressed by the venom gland.

Its subcellular location is the secreted. Functionally, impairs hemostasis in the envenomed animal. Its function is as follows. Inhibits platelet aggregation induced by ADP, thrombin, platelet-activating factor and collagen. Acts by inhibiting fibrinogen interaction with platelet receptors GPIIb/GPIIIa (ITGA2B/ITGB3). In Protobothrops elegans (Elegant pitviper), this protein is Zinc metalloproteinase/disintegrin.